Here is a 340-residue protein sequence, read N- to C-terminus: Sodium/bile acid cotransporter 7 (340 aa).

Over 1–10 (MRLLERARKE) the chain is Cytoplasmic. A helical transmembrane segment spans residues 11-31 (WFMVGIVVAIGAAKLEPSVGV). The Extracellular segment spans residues 32–37 (NGGPLK). A helical membrane pass occupies residues 38–58 (PEITVSYIAVATIFFNSGLSL). Topologically, residues 59–71 (KTEELTSALVHLR) are cytoplasmic. The helical transmembrane segment at 72-92 (LHLFIQIFTLAFFPAAIWLFL) threads the bilayer. The Extracellular portion of the chain corresponds to 93–116 (QLLSVTSINEWLLKGLQTVGCMPP). A helical transmembrane segment spans residues 117-137 (PVSSAVILTKAVGGNEAAAIF). Position 138 (Asn-138) is a topological domain, cytoplasmic. The helical transmembrane segment at 139 to 159 (SAFGSFLGIVVTPVLLLLFLG) threads the bilayer. Residues 160–163 (SSSS) lie on the Extracellular side of the membrane. A helical membrane pass occupies residues 164 to 184 (VPFTSIFSQLFMTVVVPLVIG). Residues 185–201 (QIVRRYIKDWLERKKPP) lie on the Cytoplasmic side of the membrane. Residues 202-222 (FGVVSSSVLLMIIYTTFCDTF) form a helical membrane-spanning segment. Over 223-234 (SNPNIDLDKFSL) the chain is Extracellular. The chain crosses the membrane as a helical span at residues 235–255 (ILILFIIVSVQLSFMLLTFIF). Over 256–270 (STRNNSGFTPADTVA) the chain is Cytoplasmic. The chain crosses the membrane as a helical span at residues 271–291 (IIFCSTHKSLTLGIPMLKIVF). Residues 292-298 (AGHEHLS) are Extracellular-facing. A helical transmembrane segment spans residues 299–319 (LISVPLLIYHPAQILLGSVLV). Residues 320–340 (PTIKSWMVSRQKGVKLTRPTV) are Cytoplasmic-facing.

The protein belongs to the bile acid:sodium symporter (BASS) (TC 2.A.28) family. In terms of tissue distribution, expressed in heart, brain, colon, lung, liver, adrenal gland, stomach and ovary. Also expressed weakly in small intestine. Expressed in skeletal tissues.

It localises to the cell membrane. The protein localises to the endoplasmic reticulum membrane. The protein resides in the golgi apparatus membrane. Involved in teeth and skeletal development. Has an essential role in the biosynthesis and trafficking of glycosaminoglycans and glycoproteins to produce a proper functioning extracellular matrix. Required for extracellular matrix mineralization. Also involved in the regulation of cellular calcium homeostasis. Does not show transport activity towards bile acids or steroid sulfates (including taurocholate, cholate, chenodeoxycholate, estrone-3-sulfate, dehydroepiandrosterone sulfate (DHEAS) and pregnenolone sulfate). In Mus musculus (Mouse), this protein is Sodium/bile acid cotransporter 7 (Slc10a7).